A 491-amino-acid polypeptide reads, in one-letter code: Zinc finger and SCAN domain-containing protein 22 (491 aa).

Serine 9 bears the Phosphoserine mark. The 83-residue stretch at 49–131 (RLRFRHFRYE…VLVEDLTQVL (83 aa)) folds into the SCAN box domain. 2 disordered regions span residues 134–161 (RGWDPGAEPTEASCKQSDLGESEPSNVT) and 204–249 (FKKT…DKFD). Over residues 214 to 224 (VPTDQRGRESG) the composition is skewed to basic and acidic residues. Residues 225 to 241 (ASRNSSSAWPNLTSQEK) show a composition bias toward polar residues. 8 consecutive C2H2-type zinc fingers follow at residues 268–290 (SKCRECRKMFQSASALEAHQKTH), 296–318 (YACSECGKAFSRSTHLAQHQVVH), 324–346 (HECKECGKAFSRVTHLTQHQRIH), 352–374 (YKCGECGKTFSRSTHLTQHQRVH), 380–402 (YECDACGKAFSQSTHLTQHQRIH), 408–430 (YKCDACGRAFSDCSALIRHLRIH), 436–458 (YQCKVCPKAFAQSSSLIEHQRIH), and 464–486 (YKCSDCGKAFSRSSALMVHLRIH). Lysine 443 is covalently cross-linked (Glycyl lysine isopeptide (Lys-Gly) (interchain with G-Cter in SUMO2)).

It belongs to the krueppel C2H2-type zinc-finger protein family.

The protein resides in the nucleus. Functionally, may be involved in transcriptional regulation. This chain is Zinc finger and SCAN domain-containing protein 22 (ZSCAN22), found in Homo sapiens (Human).